The sequence spans 194 residues: Der GTPase-activating protein YihI (194 aa).

The interval methionine 1–lysine 87 is disordered. The span at threonine 37–aspartate 48 shows a compositional bias: basic and acidic residues.

It belongs to the YihI family. As to quaternary structure, interacts with Der.

Its function is as follows. A GTPase-activating protein (GAP) that modifies Der/EngA GTPase function. May play a role in ribosome biogenesis. This Mannheimia succiniciproducens (strain KCTC 0769BP / MBEL55E) protein is Der GTPase-activating protein YihI.